A 299-amino-acid chain; its full sequence is Glycine--tRNA ligase alpha subunit (299 aa).

The protein belongs to the class-II aminoacyl-tRNA synthetase family. In terms of assembly, tetramer of two alpha and two beta subunits.

It is found in the cytoplasm. It carries out the reaction tRNA(Gly) + glycine + ATP = glycyl-tRNA(Gly) + AMP + diphosphate. The chain is Glycine--tRNA ligase alpha subunit (glyQ) from Synechocystis sp. (strain ATCC 27184 / PCC 6803 / Kazusa).